We begin with the raw amino-acid sequence, 609 residues long: Replication protein A 70 kDa DNA-binding subunit (609 aa).

Residues 112–164 (IGNPHPYNDGQGPPQPAAPAPASAPPPSKPQNISAPPPPSMNRGASKLFGGGS) are disordered. The span at 124–151 (PPQPAAPAPASAPPPSKPQNISAPPPPS) shows a compositional bias: pro residues. The segment at residues 189–273 (WTVRARVTNK…VKNDYEMTFN (85 aa)) is a DNA-binding region (OB). Residues 472–494 (CPSQDCNKKVIDQQNGLFRCEKC) form a C4-type zinc finger.

Belongs to the replication factor A protein 1 family. In terms of assembly, component of the heterotrimeric canonical replication protein A complex (RPA). Interacts with rpain-a.

The protein localises to the nucleus. It is found in the PML body. Functionally, as part of the heterotrimeric replication protein A complex (RPA/RP-A), binds and stabilizes single-stranded DNA intermediates, that form during DNA replication or upon DNA stress. It prevents their reannealing and in parallel, recruits and activates different proteins and complexes involved in DNA metabolism. Thereby, it plays an essential role both in DNA replication and the cellular response to DNA damage. The protein is Replication protein A 70 kDa DNA-binding subunit (rpa1) of Xenopus tropicalis (Western clawed frog).